Here is an 824-residue protein sequence, read N- to C-terminus: Phenylalanine--tRNA ligase beta subunit (824 aa).

The tRNA-binding domain occupies 39–153 (SEQAKNVVIG…NIPPIGSNAV (115 aa)). The 94-residue stretch at 414 to 507 (KKSISVNLRM…RLIGYDNFDS (94 aa)) folds into the B5 domain. Mg(2+) is bound by residues Asp485, Asp491, Glu494, and Glu495. Residues 730-823 (PTVPYMERDI…LKEKIKAELR (94 aa)) enclose the FDX-ACB domain.

It belongs to the phenylalanyl-tRNA synthetase beta subunit family. Type 1 subfamily. Tetramer of two alpha and two beta subunits. Mg(2+) is required as a cofactor.

It localises to the cytoplasm. It catalyses the reaction tRNA(Phe) + L-phenylalanine + ATP = L-phenylalanyl-tRNA(Phe) + AMP + diphosphate + H(+). The chain is Phenylalanine--tRNA ligase beta subunit from Prochlorococcus marinus (strain NATL2A).